A 457-amino-acid polypeptide reads, in one-letter code: Embryogenesis-associated protein EMB8 (457 aa).

Residues 39–59 are disordered; the sequence is KKPAAGACEEQDELTSGSAAR. The AB hydrolase-1 domain maps to 151 to 391; the sequence is PVLILLPGLT…LVVTPNGGHL (241 aa). Active-site charge relay system residues include S231, D361, and H390. Positions 438–447 are enriched in basic and acidic residues; that stretch reads VDSVHTRETN. A disordered region spans residues 438-457; the sequence is VDSVHTRETNNYKSPIENVN. Polar residues predominate over residues 448-457; it reads NYKSPIENVN.

The protein belongs to the AB hydrolase superfamily. AB hydrolase 4 family.

This is Embryogenesis-associated protein EMB8 (EMB8) from Picea glauca (White spruce).